A 270-amino-acid polypeptide reads, in one-letter code: Formamidopyrimidine-DNA glycosylase (270 aa).

Residue Pro2 is the Schiff-base intermediate with DNA of the active site. The active-site Proton donor is the Glu3. Lys58 functions as the Proton donor; for beta-elimination activity in the catalytic mechanism. DNA-binding residues include His91, Arg110, and Arg151. The segment at 236 to 270 adopts an FPG-type zinc-finger fold; sequence LVYGRDGLPCPNCGRALKHATIGQRASVWCSHCQR. Arg260 acts as the Proton donor; for delta-elimination activity in catalysis.

The protein belongs to the FPG family. As to quaternary structure, monomer. Zn(2+) serves as cofactor.

The enzyme catalyses Hydrolysis of DNA containing ring-opened 7-methylguanine residues, releasing 2,6-diamino-4-hydroxy-5-(N-methyl)formamidopyrimidine.. It catalyses the reaction 2'-deoxyribonucleotide-(2'-deoxyribose 5'-phosphate)-2'-deoxyribonucleotide-DNA = a 3'-end 2'-deoxyribonucleotide-(2,3-dehydro-2,3-deoxyribose 5'-phosphate)-DNA + a 5'-end 5'-phospho-2'-deoxyribonucleoside-DNA + H(+). Involved in base excision repair of DNA damaged by oxidation or by mutagenic agents. Acts as a DNA glycosylase that recognizes and removes damaged bases. Has a preference for oxidized purines, such as 7,8-dihydro-8-oxoguanine (8-oxoG). Has AP (apurinic/apyrimidinic) lyase activity and introduces nicks in the DNA strand. Cleaves the DNA backbone by beta-delta elimination to generate a single-strand break at the site of the removed base with both 3'- and 5'-phosphates. This is Formamidopyrimidine-DNA glycosylase from Stenotrophomonas maltophilia (strain K279a).